The chain runs to 512 residues: GMP synthase [glutamine-hydrolyzing] (512 aa).

The 194-residue stretch at 3–196 (NILILDFGSQ…VKHICQASET (194 aa)) folds into the Glutamine amidotransferase type-1 domain. C80 (nucleophile) is an active-site residue. Catalysis depends on residues H169 and E171. Positions 197-387 (WKIETIEKQL…LGLPDVLISR (191 aa)) constitute a GMPS ATP-PPase domain. 225–231 (SGGVDSS) is an ATP binding site.

As to quaternary structure, homodimer.

The enzyme catalyses XMP + L-glutamine + ATP + H2O = GMP + L-glutamate + AMP + diphosphate + 2 H(+). It participates in purine metabolism; GMP biosynthesis; GMP from XMP (L-Gln route): step 1/1. Functionally, catalyzes the synthesis of GMP from XMP. This chain is GMP synthase [glutamine-hydrolyzing], found in Chlamydia caviae (strain ATCC VR-813 / DSM 19441 / 03DC25 / GPIC) (Chlamydophila caviae).